Consider the following 150-residue polypeptide: Natriuretic peptides A (150 aa).

Positions 1–24 (MSSFTITVSFLLVLVFQFPGQTRA) are cleaved as a signal peptide. 2 consecutive propeptides follow at residues 25–122 (NPVY…AAPR) and 92–102 (DGGALGRGPWD). The interval 77–100 (LEVPPWTGEVNPAQRDGGALGRGP) is disordered. At Ser128 the chain carries Phosphoserine. A disulfide bond links Cys129 and Cys145.

The protein belongs to the natriuretic peptide family. As to quaternary structure, homodimer; disulfide-linked antiparallel dimer. In terms of processing, the precursor molecule is proteolytically cleaved by CORIN at Arg-122 to produce the atrial natriuretic peptide. Undergoes further proteolytic cleavage by unknown proteases to give rise to long-acting natriuretic peptide, vessel dilator and kaliuretic peptide. Additional processing gives rise to the auriculin and atriopeptin peptides. In the kidneys, alternative processing by an unknown protease results in the peptide urodilatin. Post-translationally, cleavage by MME initiates degradation of the factor and thereby regulates its activity. Degradation by IDE results in reduced activation of NPR1 (in vitro). During IDE degradation, the resulting products can temporarily stimulate NPR2 to produce cGMP, before the fragments are completely degraded and inactivated by IDE (in vitro). Degraded by IDE. In terms of processing, phosphorylation on Ser-128 decreases vasorelaxant activity. As to expression, brain (at protein level).

The protein resides in the secreted. It localises to the perikaryon. The protein localises to the cell projection. Functionally, hormone that plays a key role in mediating cardio-renal homeostasis, and is involved in vascular remodeling and regulating energy metabolism. Acts by specifically binding and stimulating NPR1 to produce cGMP, which in turn activates effector proteins, such as PRKG1, that drive various biological responses. Regulates vasodilation, natriuresis, diuresis and aldosterone synthesis and is therefore essential for regulating blood pressure, controlling the extracellular fluid volume and maintaining the fluid-electrolyte balance. Also involved in inhibiting cardiac remodeling and cardiac hypertrophy by inducing cardiomyocyte apoptosis and attenuating the growth of cardiomyocytes and fibroblasts. Plays a role in female pregnancy by promoting trophoblast invasion and spiral artery remodeling in uterus, and thus prevents pregnancy-induced hypertension. In adipose tissue, acts in various cGMP- and PKG-dependent pathways to regulate lipid metabolism and energy homeostasis. This includes up-regulating lipid metabolism and mitochondrial oxygen utilization by activating the AMP-activated protein kinase (AMPK), and increasing energy expenditure by acting via MAPK11 to promote the UCP1-dependent thermogenesis of brown adipose tissue. Binds the clearance receptor NPR3 which removes the hormone from circulation. In terms of biological role, may have a role in cardio-renal homeostasis through regulation of natriuresis, diuresis, vasodilation, and inhibiting aldosterone synthesis. In vitro, promotes the production of cGMP and induces vasodilation. May promote natriuresis, at least in part, by enhancing prostaglandin E2 synthesis resulting in the inhibition of renal Na+-K+-ATPase. However reports on the involvement of this peptide in mammal blood volume and blood pressure homeostasis are conflicting; according to a report, in vivo it is not sufficient to activate cGMP and does not inhibit collecting duct transport nor effect diuresis and natriuresis. Appears to bind to specific receptors that are distinct from the receptors bound by atrial natriuretic peptide and vessel dilator. Possibly enhances protein excretion in urine by decreasing proximal tubular protein reabsorption. Its function is as follows. May have a role in cardio-renal homeostasis through regulation of natriuresis, diuresis, and vasodilation. In vitro, promotes the production of cGMP and induces vasodilation. May promote natriuresis, at least in part, by enhancing prostaglandin E2 synthesis resulting in the inhibition of renal Na+-K+-ATPase. However reports on the involvement of this peptide in mammal blood volume and blood pressure homeostasis are conflicting; according to a report it is not sufficient to activate cGMP and does not inhibit collecting duct transport nor effect diuresis and natriuresis. Appears to bind to specific receptors that are distinct from the receptors bound by the atrial natriuretic and long-acting natriuretic peptides. Possibly functions in protein excretion in urine by maintaining the integrity of the proximal tubules and enhancing protein excretion by decreasing proximal tubular protein reabsorption. May have a role in cardio-renal homeostasis through regulation of diuresis and inhibiting aldosterone synthesis. In vitro, promotes the production of cGMP and induces vasodilation. May promote natriuresis, at least in part, by enhancing prostaglandin E2 synthesis resulting in the inhibition of renal Na+-K+-ATPase. May have a role in potassium excretion but not sodium excretion (natriuresis). Possibly enhances protein excretion in urine by decreasing proximal tubular protein reabsorption. Functionally, hormone produced in the kidneys that appears to be important for maintaining cardio-renal homeostasis. Mediates vasodilation, natriuresis and diuresis primarily in the renal system, in order to maintain the extracellular fluid volume and control the fluid-electrolyte balance. Specifically binds and stimulates cGMP production by renal transmembrane receptors, likely NPR1. Urodilatin not ANP, may be the natriuretic peptide responsible for the regulation of sodium and water homeostasis in the kidney. In terms of biological role, may have a role in cardio-renal homeostasis through regulation of natriuresis and vasodilation. In vivo promotes natriuresis and in vitro, vasodilates renal artery strips. Its function is as follows. May have a role in cardio-renal homeostasis through regulation of regulation of natriuresis and vasodilation. In vivo promotes natriuresis. In vitro, vasodilates intestinal smooth muscle but not smooth muscle strips. May have a role in cardio-renal homeostasis through regulation of natriuresis and vasodilation. In vivo promotes natriuresis. In vitro, selectively vasodilates intestinal and vascular smooth muscle strips. Functionally, may have a role in cardio-renal homeostasis through regulation of natriuresis and vasodilation. In vivo promotes natriuresis. In vitro, selectively vasodilates intestinal smooth muscle but not vascular smooth muscle strips. The protein is Natriuretic peptides A (NPPA) of Sus scrofa (Pig).